Consider the following 314-residue polypeptide: tRNA uridine(34) hydroxylase (314 aa).

A Rhodanese domain is found at 135 to 229 (ADPETLVIDT…YLEQIPAEES (95 aa)). Residue Cys-189 is the Cysteine persulfide intermediate of the active site.

It belongs to the TrhO family.

The enzyme catalyses uridine(34) in tRNA + AH2 + O2 = 5-hydroxyuridine(34) in tRNA + A + H2O. Its function is as follows. Catalyzes oxygen-dependent 5-hydroxyuridine (ho5U) modification at position 34 in tRNAs. The protein is tRNA uridine(34) hydroxylase of Sinorhizobium fredii (strain NBRC 101917 / NGR234).